The primary structure comprises 99 residues: Large ribosomal subunit protein bL21 (99 aa).

The protein belongs to the bacterial ribosomal protein bL21 family. As to quaternary structure, part of the 50S ribosomal subunit. Contacts protein L20.

This protein binds to 23S rRNA in the presence of protein L20. In Mesomycoplasma hyopneumoniae (strain 232) (Mycoplasma hyopneumoniae), this protein is Large ribosomal subunit protein bL21.